Here is a 406-residue protein sequence, read N- to C-terminus: Zinc finger protein CONSTANS-LIKE 6 (406 aa).

4 residues coordinate Zn(2+): C17, C20, C40, and H45. The segment at 17-59 adopts a B box-type; atypical zinc-finger fold; that stretch reads CDSCVKRRARWYCAADDAFLCHACDGSVHSANPLARRHERVRL. Positions 63-95 are disordered; it reads SAGKYRHASPPHQATWHQGFTRKARTPRGGKKS. Residues 82-95 are compositionally biased toward basic residues; the sequence is FTRKARTPRGGKKS. The CCT domain occupies 357–399; that stretch reads REARVSRYREKRRTRLFSKKIRYEVRKLNAEKRPRMKGRFVKR.

It belongs to the CONSTANS family.

Its subcellular location is the nucleus. This Arabidopsis thaliana (Mouse-ear cress) protein is Zinc finger protein CONSTANS-LIKE 6 (COL6).